A 386-amino-acid polypeptide reads, in one-letter code: Phosphoglycerate kinase (386 aa).

Substrate contacts are provided by residues 21 to 23, Arg-36, 59 to 62, Arg-113, and Arg-146; these read DLN and HLGR. Residues Lys-197, Glu-314, and 340–343 each bind ATP; that span reads GGDT.

Belongs to the phosphoglycerate kinase family. In terms of assembly, monomer.

It localises to the cytoplasm. The catalysed reaction is (2R)-3-phosphoglycerate + ATP = (2R)-3-phospho-glyceroyl phosphate + ADP. It functions in the pathway carbohydrate degradation; glycolysis; pyruvate from D-glyceraldehyde 3-phosphate: step 2/5. This chain is Phosphoglycerate kinase, found in Ectopseudomonas mendocina (strain ymp) (Pseudomonas mendocina).